A 161-amino-acid polypeptide reads, in one-letter code: Small heat shock protein ibp (161 aa).

One can recognise a sHSP domain in the interval 35 to 150 (EKPLSDTPAY…KPKKIFINIP (116 aa)).

The protein belongs to the small heat shock protein (HSP20) family.

In Buchnera aphidicola subsp. Schizaphis graminum (strain Sg), this protein is Small heat shock protein ibp (ibp).